We begin with the raw amino-acid sequence, 1203 residues long: DNA-directed RNA polymerase subunit beta' (1203 aa).

Residues Cys60, Cys62, Cys75, and Cys78 each coordinate Zn(2+). Mg(2+) contacts are provided by Asp449, Asp451, and Asp453. Zn(2+) is bound by residues Cys818, Cys892, Cys899, and Cys902.

It belongs to the RNA polymerase beta' chain family. In terms of assembly, the RNAP catalytic core consists of 2 alpha, 1 beta, 1 beta' and 1 omega subunit. When a sigma factor is associated with the core the holoenzyme is formed, which can initiate transcription. The cofactor is Mg(2+). Requires Zn(2+) as cofactor.

The enzyme catalyses RNA(n) + a ribonucleoside 5'-triphosphate = RNA(n+1) + diphosphate. Its function is as follows. DNA-dependent RNA polymerase catalyzes the transcription of DNA into RNA using the four ribonucleoside triphosphates as substrates. This Bacillus cereus (strain ATCC 10987 / NRS 248) protein is DNA-directed RNA polymerase subunit beta'.